The sequence spans 394 residues: Alanine racemase 2 (394 aa).

Lysine 39 functions as the Proton acceptor; specific for D-alanine in the catalytic mechanism. The residue at position 39 (lysine 39) is an N6-(pyridoxal phosphate)lysine. Arginine 139 lines the substrate pocket. The active-site Proton acceptor; specific for L-alanine is tyrosine 272. Methionine 320 lines the substrate pocket.

This sequence belongs to the alanine racemase family. Requires pyridoxal 5'-phosphate as cofactor.

The catalysed reaction is L-alanine = D-alanine. The protein operates within amino-acid biosynthesis; D-alanine biosynthesis; D-alanine from L-alanine: step 1/1. In terms of biological role, catalyzes the interconversion of L-alanine and D-alanine. May also act on other amino acids. This is Alanine racemase 2 (alr2) from Bacillus subtilis (strain 168).